A 531-amino-acid polypeptide reads, in one-letter code: MQPIVWLLGGAIALLVVVIRAAWTYGHRNQDMPSGPPTLPFIGNAHLIPKSYTHIQFTAWARQYGGLYMLKVGNSNMAVVTDRRIVKEVLDSKSSLYSHRPHSFVSHELITQGDHLLVMHYGPKWRTFRRLVHQHLMESMVDSQHLPIVNAEAIQLVRDYMLDPEHHMAHPKRFSNSITNSIVFGIRTADRHGSNMNRLYTLMEQWSEIMETGATPPVDIFPWLKRLPEALFGHYVTRARAIGAQMETLYEDILQRVEKRRSGGVHLDTFMDRVIASQDRNQLPRHQLAFIGGVLMEGGSDTSSSLTLAIVQALTLHPEVQRKAHAEIDAVVGHARSPVWDDLARLPYINMIIKEGHRWRPILPLCFPHALGQDDWVDGKFLPKGTMVVVNTWGMHMDPDHRLNQKYDPAKFVPERFAEHPALAPEYVPGAWENRDHYGYGVSRRICPGIHLAERNMFLAIAKLLWAFEFQPGPEGEPCDSDPVTGYQHGFLYCAKPYSTRPVLRSESIRETVEREFALAQREVFSTFTEG.

A helical transmembrane segment spans residues 3–23 (PIVWLLGGAIALLVVVIRAAW). C447 is a binding site for heme.

This sequence belongs to the cytochrome P450 family. Heme is required as a cofactor.

The protein localises to the endoplasmic reticulum membrane. It carries out the reaction 3-methylphenol + reduced [NADPH--hemoprotein reductase] + O2 = 3-hydroxybenzyl alcohol + oxidized [NADPH--hemoprotein reductase] + H2O + H(+). It functions in the pathway secondary metabolite biosynthesis. Cytochrome P450 monooxygenase; part of the gene cluster that mediates the biosynthesis of aculins. The pathway begins with the synthesis of 6-methylsalicylic acid by the polyketide synthase (PKS) acuA via condensation of acetate and malonate units. The 6-methylsalicylic acid decarboxylase acuB then catalyzes the decarboxylation of 6-methylsalicylic acid to yield m-cresol (also known as 3-methylphenol). These first reactions occur in the cytosol. The intermediate m-cresol is then transported into the endoplasmic reticulum where the cytochrome P450 monooxygenase acuC converts it to m-hydroxybenzyl alcohol, which is further converted to gentisyl alcohol by the cytochrome P450 monooxygenase acuD. Gentisyl alcohol is further oxidized by the oxidoreductase acuE that probably catalyzes hydroxylation of the aromatic ring. The aromatic system might then be opened by oxidation through a Baeyer-Villiger type of oxidation, which could be catalyzed by acuF, with the carboxylic acid at C-1 subsequently reduced to an aldehyde by acuG. Subsequently, a hemiacetal is formed, before the dehydrogenase acuH would reduce the double bond between C-4 and C-6. Finally, keto-enol tautomerism results in formation of aculinic acid, which exists as two diastereomers (both R/S configurations at C-1) by non-enzymatic hemiacetal formation. The carboxypeptidase acuI could be involved in the linking of aculinic acid to an aculene A moiety produced by the aculene biosynthesis cluster and which leads to the production of aculin A. AcuI may also be involved in the attachment of proline to aculinic acid to form epi-aculins A and B. The chain is Cytochrome P450 monooxygenase acuC from Aspergillus aculeatus (strain ATCC 16872 / CBS 172.66 / WB 5094).